Here is a 331-residue protein sequence, read N- to C-terminus: Laforin (331 aa).

Residues 1–124 (MRFRFGVVVP…NNLVDGVYCL (124 aa)) enclose the CBM20 domain. Serine 25 carries the post-translational modification Phosphoserine; by AMPK. Substrate is bound by residues tryptophan 32, lysine 87, 103-107 (GPHHD), aspartate 197, aspartate 235, and arginine 241. The region spanning 156 to 323 (HYSRILPNIW…QEDFFQKFGK (168 aa)) is the Tyrosine-protein phosphatase domain. The active-site Phosphocysteine intermediate is cysteine 266. Positions 266 to 272 (CNAGVGR) match the Glucan phosphatase signature motif CXAGXGR motif. Residues 267-272 (NAGVGR) and tyrosine 304 each bind substrate.

It belongs to the protein-tyrosine phosphatase family. As to quaternary structure, homodimer. Interacts with itself. Interacts with PPP1R3B, PPP1R3C, PPP1R3D, HIRIP5, and EPM2AIP1. Binds glycogen and Lafora bodies. Interacts with NHLRC1/malin (via the NHL repeats). Forms a complex with NHLRC1/malin and HSP70. Interacts with PPP1R3D; in the presence of NHLC1/malin the interaction leads to ubiquitination and autophagic degradation of PPP1R3D. Interacts (via the phosphatase domain) with MAPT/Tau; the interaction dephosphorylates MAPT. Isoform 1 and isoform 2 interact to form a heterodimeric complex that lacks phosphatase activity (in vitro). Active phosphatase isoform 7 and isoform 1 interact with each other, but give rise to lower phosphatase activity than isoform 1 or isoform 7 by themselves (in vitro). Active phosphatase isoform 7 and inactive isoform 2 interact with each other, but give rise to lower phosphatase activity than isoform 7 by itself (in vitro). Interacts with PRDM8. Polyubiquitinated by NHLRC1/malin. Post-translationally, phosphorylation on Ser-25 by AMPK affects the phosphatase activity of the enzyme and its ability to homodimerize and interact with NHLRC1, PPP1R3C or PRKAA2. As to expression, expressed in heart, skeletal muscle, kidney, pancreas and brain. Isoform 4 is also expressed in the placenta.

The protein localises to the cytoplasm. It is found in the endoplasmic reticulum membrane. Its subcellular location is the cell membrane. The protein resides in the nucleus. The enzyme catalyses O-phospho-L-tyrosyl-[protein] + H2O = L-tyrosyl-[protein] + phosphate. The catalysed reaction is O-phospho-L-seryl-[protein] + H2O = L-seryl-[protein] + phosphate. It catalyses the reaction O-phospho-L-threonyl-[protein] + H2O = L-threonyl-[protein] + phosphate. Its function is as follows. Plays an important role in preventing glycogen hyperphosphorylation and the formation of insoluble aggregates, via its activity as glycogen phosphatase, and by promoting the ubiquitination of proteins involved in glycogen metabolism via its interaction with the E3 ubiquitin ligase NHLRC1/malin. Shows strong phosphatase activity towards complex carbohydrates in vitro, avoiding glycogen hyperphosphorylation which is associated with reduced branching and formation of insoluble aggregates. Dephosphorylates phosphotyrosine and synthetic substrates, such as para-nitrophenylphosphate (pNPP), and has low activity with phosphoserine and phosphothreonine substrates (in vitro). Has been shown to dephosphorylate MAPT. Forms a complex with NHLRC1/malin and HSP70, which suppresses the cellular toxicity of misfolded proteins by promoting their degradation through the ubiquitin-proteasome system (UPS). Acts as a scaffold protein to facilitate PPP1R3C/PTG ubiquitination by NHLRC1/malin. Also promotes proteasome-independent protein degradation through the macroautophagy pathway. Does not bind to glycogen. Lacks phosphatase activity and might function as a dominant-negative regulator for the phosphatase activity of isoform 1 and isoform 7. Functionally, has phosphatase activity (in vitro). The protein is Laforin (EPM2A) of Homo sapiens (Human).